A 333-amino-acid chain; its full sequence is MSVSNPPSSGKPLKLRVNKDSEGYLSLVTESGEVYKCPICGNDKFVYNYERGEAVCIVCGAVVQEQLLDLGPEWRAFTSEEKGQRARTGAPLTRLISEALTTVIDWRDKDVSGKELDIKRKLEVIRLRKWQTRARVQTSYERNFIQAAQELERLRSAMGIPRPCIEQALEIYRQALEKELVRGRSVEAMAAAALYMACRMMKMPRPLDELVRYTKASRREVARCYRLLLRELNVKVPISDPILYISRIAEQLKLSGEVVKTAIDILQKAKKAGITAGKDPAGLAAAAVYIASLMHGDNRTQKDFAVAAGVTEVTVRNRYKELAKALNIKVPVK.

The segment at E33 to Q64 adopts a TFIIB-type zinc-finger fold. Zn(2+) is bound by residues C37, C40, C56, and C59. 2 repeat units span residues Q149–L232 and L243–K324.

The protein belongs to the TFIIB family.

Its function is as follows. Stabilizes TBP binding to an archaeal box-A promoter. Also responsible for recruiting RNA polymerase II to the pre-initiation complex (DNA-TBP-TFIIB). The chain is Transcription initiation factor IIB from Pyrobaculum aerophilum (strain ATCC 51768 / DSM 7523 / JCM 9630 / CIP 104966 / NBRC 100827 / IM2).